The chain runs to 488 residues: Putative BTB/POZ domain-containing protein L674 (488 aa).

The BTB domain occupies 83–150; the sequence is NIVYFNIGGK…VKNQKCPINN (68 aa).

Belongs to the mimivirus BTB/WD family.

The protein is Putative BTB/POZ domain-containing protein L674 of Acanthamoeba polyphaga (Amoeba).